Here is a 523-residue protein sequence, read N- to C-terminus: Ribonuclease Y (523 aa).

Residues 18–38 (WSLTVALVIGGALGFLVVWAF) traverse the membrane as a helical segment. The KH domain occupies 213-276 (TSTIVSLPNE…EVARGALEAL (64 aa)). Residues 339–432 (VLDHSVETAS…VILADTISAT (94 aa)) enclose the HD domain.

This sequence belongs to the RNase Y family.

It is found in the cell membrane. In terms of biological role, endoribonuclease that initiates mRNA decay. In Opitutus terrae (strain DSM 11246 / JCM 15787 / PB90-1), this protein is Ribonuclease Y.